A 334-amino-acid polypeptide reads, in one-letter code: MIEADRIISPNATLQEDSQDRAIRPKRLEDYVGQPQVREQMEIFINAARGRQEALDHTLIFGPPGLGKTTLANIIANEMDVSIKTTSGPVLEKAGDLAALLTNLEPKDVLFIDEIHRLSAAVEEVLYPAMEDYQLDIMIGEGPAARSIKLDLPPFTLVGATTRAGLLTSPLRDRFGIVQRLEFYSVEDLRHIVARSASLLGVSIDDGGAHEIARRSRGTPRIANRLLRRVRDYAEVKADGAITNEVADKALNMLNVDLHGFDHMDRRLLLAVMEKFDGGPVGVESLAAAIGEEKGTIEDVVEPYLIQQGFLMRTPRGRVATQAAYNHFGLTMPE.

The interval 4 to 184 (ADRIISPNAT…FGIVQRLEFY (181 aa)) is large ATPase domain (RuvB-L). Residues isoleucine 23, arginine 24, glycine 65, lysine 68, threonine 69, threonine 70, 131-133 (EDY), arginine 174, tyrosine 184, and arginine 221 contribute to the ATP site. Threonine 69 provides a ligand contact to Mg(2+). Residues 185-255 (SVEDLRHIVA…VADKALNMLN (71 aa)) are small ATPAse domain (RuvB-S). The interval 258 to 334 (LHGFDHMDRR…YNHFGLTMPE (77 aa)) is head domain (RuvB-H). Positions 313 and 318 each coordinate DNA.

The protein belongs to the RuvB family. Homohexamer. Forms an RuvA(8)-RuvB(12)-Holliday junction (HJ) complex. HJ DNA is sandwiched between 2 RuvA tetramers; dsDNA enters through RuvA and exits via RuvB. An RuvB hexamer assembles on each DNA strand where it exits the tetramer. Each RuvB hexamer is contacted by two RuvA subunits (via domain III) on 2 adjacent RuvB subunits; this complex drives branch migration. In the full resolvosome a probable DNA-RuvA(4)-RuvB(12)-RuvC(2) complex forms which resolves the HJ.

The protein localises to the cytoplasm. It catalyses the reaction ATP + H2O = ADP + phosphate + H(+). The RuvA-RuvB-RuvC complex processes Holliday junction (HJ) DNA during genetic recombination and DNA repair, while the RuvA-RuvB complex plays an important role in the rescue of blocked DNA replication forks via replication fork reversal (RFR). RuvA specifically binds to HJ cruciform DNA, conferring on it an open structure. The RuvB hexamer acts as an ATP-dependent pump, pulling dsDNA into and through the RuvAB complex. RuvB forms 2 homohexamers on either side of HJ DNA bound by 1 or 2 RuvA tetramers; 4 subunits per hexamer contact DNA at a time. Coordinated motions by a converter formed by DNA-disengaged RuvB subunits stimulates ATP hydrolysis and nucleotide exchange. Immobilization of the converter enables RuvB to convert the ATP-contained energy into a lever motion, pulling 2 nucleotides of DNA out of the RuvA tetramer per ATP hydrolyzed, thus driving DNA branch migration. The RuvB motors rotate together with the DNA substrate, which together with the progressing nucleotide cycle form the mechanistic basis for DNA recombination by continuous HJ branch migration. Branch migration allows RuvC to scan DNA until it finds its consensus sequence, where it cleaves and resolves cruciform DNA. The sequence is that of Holliday junction branch migration complex subunit RuvB from Hahella chejuensis (strain KCTC 2396).